Reading from the N-terminus, the 255-residue chain is 5'-nucleotidase SurE (255 aa).

4 residues coordinate a divalent metal cation: Asp8, Asp9, Ser39, and Asn95.

Belongs to the SurE nucleotidase family. A divalent metal cation serves as cofactor.

The protein localises to the cytoplasm. It catalyses the reaction a ribonucleoside 5'-phosphate + H2O = a ribonucleoside + phosphate. Functionally, nucleotidase that shows phosphatase activity on nucleoside 5'-monophosphates. In Thermosipho africanus (strain TCF52B), this protein is 5'-nucleotidase SurE.